A 58-amino-acid polypeptide reads, in one-letter code: Ribosome modulation factor (58 aa).

The protein belongs to the ribosome modulation factor family.

Its subcellular location is the cytoplasm. During stationary phase, converts 70S ribosomes to an inactive dimeric form (100S ribosomes). The polypeptide is Ribosome modulation factor (Shewanella amazonensis (strain ATCC BAA-1098 / SB2B)).